An 847-amino-acid polypeptide reads, in one-letter code: Leucine--tRNA ligase (847 aa).

The 'HIGH' region motif lies at 41 to 51 (PYPSGRIHMGH). Positions 619-623 (KMSKS) match the 'KMSKS' region motif. Residue K622 participates in ATP binding.

The protein belongs to the class-I aminoacyl-tRNA synthetase family.

The protein localises to the cytoplasm. It carries out the reaction tRNA(Leu) + L-leucine + ATP = L-leucyl-tRNA(Leu) + AMP + diphosphate. In Cereibacter sphaeroides (strain ATCC 17023 / DSM 158 / JCM 6121 / CCUG 31486 / LMG 2827 / NBRC 12203 / NCIMB 8253 / ATH 2.4.1.) (Rhodobacter sphaeroides), this protein is Leucine--tRNA ligase.